The chain runs to 301 residues: Transposase InsD for insertion element IS2D (301 aa).

An Integrase catalytic domain is found at 106–289 (KPAVPPSKRA…SPREYLRQRA (184 aa)).

Functionally, involved in the transposition of the insertion sequence IS2. This is Transposase InsD for insertion element IS2D (insD2) from Escherichia coli (strain K12).